The primary structure comprises 57 residues: Sperm protamine P1-type (57 aa).

Positions 1–57 (MARYRHNRSRSRSRHRRRRRGHRGGRYRRRRRRGRYGHRRHHRGHSRRRRKRRRSRH) are disordered.

The protein belongs to the protamine P1 family. As to expression, testis.

The protein resides in the nucleus. The protein localises to the chromosome. Its function is as follows. Protamines substitute for histones in the chromatin of sperm during the haploid phase of spermatogenesis. They compact sperm DNA into a highly condensed, stable and inactive complex. This chain is Sperm protamine P1-type, found in Alligator mississippiensis (American alligator).